We begin with the raw amino-acid sequence, 88 residues long: Small ribosomal subunit protein bS16 (88 aa).

Belongs to the bacterial ribosomal protein bS16 family.

The polypeptide is Small ribosomal subunit protein bS16 (Leptospira interrogans serogroup Icterohaemorrhagiae serovar Lai (strain 56601)).